A 322-amino-acid polypeptide reads, in one-letter code: Secreted RxLR effector protein RXLR-C17 (322 aa).

Positions 1 to 25 are cleaved as a signal peptide; it reads MREPAFSFRLHLFAAMILLVDVFSA. Positions 43 to 62 match the RxLR-dEER motif; the sequence is RQLRARDSQAKNYVIRDEER. N-linked (GlcNAc...) asparagine glycosylation occurs at asparagine 73.

This sequence belongs to the RxLR effector family.

It is found in the secreted. The protein resides in the host cytoplasm. The protein localises to the host nucleus. Functionally, secreted effector that suppresses pattern-triggered immunity (PTI) in plant host. This Plasmopara halstedii (Downy mildew of sunflower) protein is Secreted RxLR effector protein RXLR-C17.